A 1298-amino-acid chain; its full sequence is Phosphoribosylformylglycinamidine synthase (1298 aa).

The interval 303-327 (FPGAATGSGGEIRDEGATGRGAKPK) is disordered. ATP is bound by residues 305–316 (GAATGSGGEIRD), 384–386 (TGY), and alanine 676. Aspartate 677, glutamate 716, asparagine 720, and aspartate 884 together coordinate Mg(2+). Serine 886 contacts ATP. The Glutamine amidotransferase type-1 domain maps to 1045–1298 (VAVLREQGVN…MFRNARAWVN (254 aa)). Cysteine 1138 (nucleophile) is an active-site residue. Catalysis depends on residues histidine 1263 and glutamate 1265.

The protein in the N-terminal section; belongs to the FGAMS family. As to quaternary structure, monomer.

The protein resides in the cytoplasm. The enzyme catalyses N(2)-formyl-N(1)-(5-phospho-beta-D-ribosyl)glycinamide + L-glutamine + ATP + H2O = 2-formamido-N(1)-(5-O-phospho-beta-D-ribosyl)acetamidine + L-glutamate + ADP + phosphate + H(+). It functions in the pathway purine metabolism; IMP biosynthesis via de novo pathway; 5-amino-1-(5-phospho-D-ribosyl)imidazole from N(2)-formyl-N(1)-(5-phospho-D-ribosyl)glycinamide: step 1/2. Phosphoribosylformylglycinamidine synthase involved in the purines biosynthetic pathway. Catalyzes the ATP-dependent conversion of formylglycinamide ribonucleotide (FGAR) and glutamine to yield formylglycinamidine ribonucleotide (FGAM) and glutamate. This Pseudomonas syringae pv. tomato (strain ATCC BAA-871 / DC3000) protein is Phosphoribosylformylglycinamidine synthase.